Here is a 144-residue protein sequence, read N- to C-terminus: MAVSLPNSFLQISPCVPSLQLRKPVMAAVKGGKQSVRRSSNTVVQITCRKKELHPEFHEDAKVYCNGELVMTTGGTKKEYVVDVWSGNHPFYLGNRSALMVDADQVEKFRKRFAGLSEIMEIPVLKGEIIMPTKKSKGPKGKKK.

The N-terminal 48 residues, 1-48 (MAVSLPNSFLQISPCVPSLQLRKPVMAAVKGGKQSVRRSSNTVVQITC), are a transit peptide targeting the chloroplast.

It belongs to the bacterial ribosomal protein bL31 family. Type A subfamily. As to quaternary structure, part of the 50S ribosomal subunit.

It localises to the plastid. It is found in the chloroplast. Its function is as follows. Binds the 23S rRNA. The polypeptide is Large ribosomal subunit protein bL31c (RPL31) (Arabidopsis thaliana (Mouse-ear cress)).